The sequence spans 315 residues: Putative steroid dehydrogenase 2 (315 aa).

47-76 provides a ligand contact to NADP(+); that stretch reads ASWAVVTGATDGIGKSYSFELARRGFNVYI. Tyr-202 is an active-site residue.

Belongs to the short-chain dehydrogenases/reductases (SDR) family. 17-beta-HSD 3 subfamily.

This is Putative steroid dehydrogenase 2 (stdh-2) from Caenorhabditis elegans.